A 280-amino-acid polypeptide reads, in one-letter code: Ribosomal RNA small subunit methyltransferase A (280 aa).

Residues asparagine 18, leucine 20, glycine 45, glutamate 66, aspartate 89, and asparagine 110 each coordinate S-adenosyl-L-methionine.

It belongs to the class I-like SAM-binding methyltransferase superfamily. rRNA adenine N(6)-methyltransferase family. RsmA subfamily.

It is found in the cytoplasm. The catalysed reaction is adenosine(1518)/adenosine(1519) in 16S rRNA + 4 S-adenosyl-L-methionine = N(6)-dimethyladenosine(1518)/N(6)-dimethyladenosine(1519) in 16S rRNA + 4 S-adenosyl-L-homocysteine + 4 H(+). Its function is as follows. Specifically dimethylates two adjacent adenosines (A1518 and A1519) in the loop of a conserved hairpin near the 3'-end of 16S rRNA in the 30S particle. May play a critical role in biogenesis of 30S subunits. The protein is Ribosomal RNA small subunit methyltransferase A of Cupriavidus necator (strain ATCC 17699 / DSM 428 / KCTC 22496 / NCIMB 10442 / H16 / Stanier 337) (Ralstonia eutropha).